The following is a 496-amino-acid chain: Geranylhydroquinone 3''-hydroxylase CYP76B74 (496 aa).

A helical membrane pass occupies residues 3 to 23; sequence YTTILVGFLIGFVLFKALTRK. Cys436 is a binding site for heme.

It belongs to the cytochrome P450 family. Requires heme as cofactor.

The protein resides in the endoplasmic reticulum membrane. It catalyses the reaction (2E)-geranylhydroquinone + reduced [NADPH--hemoprotein reductase] + O2 = (2Z)-3''-hydroxygeranylhydroquinone + oxidized [NADPH--hemoprotein reductase] + H2O + H(+). In terms of biological role, hydroxylase involved in the biosynthesis pathway of the red naphthoquinone pigment shikonin. Catalyzes the key step C-3''-hydroxylation of the prenylated phenolic intermediate geranylhydroquinone to form 3''-hydroxygeranylhydroquinone. The protein is Geranylhydroquinone 3''-hydroxylase CYP76B74 of Arnebia euchroma (Pink arnebia).